The sequence spans 431 residues: Adenylosuccinate lyase (431 aa).

N(6)-(1,2-dicarboxyethyl)-AMP-binding positions include 4-5 (RY), 67-69 (RHD), and 93-94 (TS). Residue His141 is the Proton donor/acceptor of the active site. Gln212 serves as a coordination point for N(6)-(1,2-dicarboxyethyl)-AMP. Ser262 functions as the Proton donor/acceptor in the catalytic mechanism. Residues Ser263, 268–270 (KRN), and 307–311 (SVERV) contribute to the N(6)-(1,2-dicarboxyethyl)-AMP site.

The protein belongs to the lyase 1 family. Adenylosuccinate lyase subfamily. In terms of assembly, homooligomer. Residues from neighboring subunits contribute catalytic and substrate-binding residues to each active site.

The enzyme catalyses N(6)-(1,2-dicarboxyethyl)-AMP = fumarate + AMP. The catalysed reaction is (2S)-2-[5-amino-1-(5-phospho-beta-D-ribosyl)imidazole-4-carboxamido]succinate = 5-amino-1-(5-phospho-beta-D-ribosyl)imidazole-4-carboxamide + fumarate. Its pathway is purine metabolism; AMP biosynthesis via de novo pathway; AMP from IMP: step 2/2. It participates in purine metabolism; IMP biosynthesis via de novo pathway; 5-amino-1-(5-phospho-D-ribosyl)imidazole-4-carboxamide from 5-amino-1-(5-phospho-D-ribosyl)imidazole-4-carboxylate: step 2/2. Its function is as follows. Catalyzes two reactions in de novo purine nucleotide biosynthesis. Catalyzes the breakdown of 5-aminoimidazole- (N-succinylocarboxamide) ribotide (SAICAR or 2-[5-amino-1-(5-phospho-beta-D-ribosyl)imidazole-4-carboxamido]succinate) to 5-aminoimidazole-4-carboxamide ribotide (AICAR or 5-amino-1-(5-phospho-beta-D-ribosyl)imidazole-4-carboxamide) and fumarate, and of adenylosuccinate (ADS or N(6)-(1,2-dicarboxyethyl)-AMP) to adenosine monophosphate (AMP) and fumarate. This Synechocystis sp. (strain ATCC 27184 / PCC 6803 / Kazusa) protein is Adenylosuccinate lyase (purB).